Here is a 345-residue protein sequence, read N- to C-terminus: Phosphoribosylformylglycinamidine cyclo-ligase (345 aa).

Belongs to the AIR synthase family.

It is found in the cytoplasm. It carries out the reaction 2-formamido-N(1)-(5-O-phospho-beta-D-ribosyl)acetamidine + ATP = 5-amino-1-(5-phospho-beta-D-ribosyl)imidazole + ADP + phosphate + H(+). It functions in the pathway purine metabolism; IMP biosynthesis via de novo pathway; 5-amino-1-(5-phospho-D-ribosyl)imidazole from N(2)-formyl-N(1)-(5-phospho-D-ribosyl)glycinamide: step 2/2. In Escherichia coli (strain K12 / MC4100 / BW2952), this protein is Phosphoribosylformylglycinamidine cyclo-ligase.